Consider the following 508-residue polypeptide: Protein O-glucosyltransferase 3 (508 aa).

An N-terminal signal peptide occupies residues 1-24; that stretch reads MLGVRRALLLPPLQLALLVAAGTG. Residues 25 to 134 form a Filamin repeat; sequence ARVSAPRSLA…VAQSPYILKG (110 aa). A glycan (N-linked (GlcNAc...) asparagine) is linked at asparagine 307. The tract at residues 480–508 is disordered; it reads RDGMERVPQPDDSTSVRQCHRKRPEREEL. A Prevents secretion from ER motif is present at residues 505–508; the sequence is REEL.

Belongs to the KDELC family.

It localises to the endoplasmic reticulum lumen. The catalysed reaction is L-seryl-[EGF-like domain protein] + UDP-alpha-D-glucose = 3-O-(beta-D-glucosyl)-L-seryl-[EGF-like domain protein] + UDP + H(+). It carries out the reaction L-seryl-[EGF-like domain protein] + UDP-alpha-D-xylose = 3-O-(beta-D-xylosyl)-L-seryl-[EGF-like domain protein] + UDP + H(+). It participates in protein modification; protein glycosylation. Its function is as follows. Protein glucosyltransferase that catalyzes the transfer of glucose from UDP-glucose to a serine residue within the consensus sequence peptide C-X-N-T-X-G-S-F-X-C. Can also catalyze the transfer of xylose from UDP-xylose but less efficiently. Specifically targets extracellular EGF repeats of proteins such as NOTCH1, NOTCH3, FBN1, FBN2 and LTBP1. May regulate the transport of NOTCH1 and NOTCH3 to the plasma membrane and thereby the Notch signaling pathway. The polypeptide is Protein O-glucosyltransferase 3 (Poglut3) (Rattus norvegicus (Rat)).